A 98-amino-acid polypeptide reads, in one-letter code: NADH-ubiquinone oxidoreductase chain 4L (98 aa).

The next 3 helical transmembrane spans lie at M1–V21, S29–L49, and I61–I81.

The protein belongs to the complex I subunit 4L family. Core subunit of respiratory chain NADH dehydrogenase (Complex I) which is composed of 45 different subunits.

Its subcellular location is the mitochondrion inner membrane. It carries out the reaction a ubiquinone + NADH + 5 H(+)(in) = a ubiquinol + NAD(+) + 4 H(+)(out). Its function is as follows. Core subunit of the mitochondrial membrane respiratory chain NADH dehydrogenase (Complex I) which catalyzes electron transfer from NADH through the respiratory chain, using ubiquinone as an electron acceptor. Part of the enzyme membrane arm which is embedded in the lipid bilayer and involved in proton translocation. In Piliocolobus badius (Western red colobus), this protein is NADH-ubiquinone oxidoreductase chain 4L (MT-ND4L).